Reading from the N-terminus, the 62-residue chain is Small ribosomal subunit protein uS14 (62 aa).

Residues C25, C28, C41, and C44 each coordinate Zn(2+).

The protein belongs to the universal ribosomal protein uS14 family. Zinc-binding uS14 subfamily. In terms of assembly, part of the 30S ribosomal subunit. Contacts proteins S3 and S10. Requires Zn(2+) as cofactor.

Binds 16S rRNA, required for the assembly of 30S particles and may also be responsible for determining the conformation of the 16S rRNA at the A site. In Sulfurihydrogenibium sp. (strain YO3AOP1), this protein is Small ribosomal subunit protein uS14.